The chain runs to 342 residues: UDP-N-acetylglucosamine--N-acetylmuramyl-(pentapeptide) pyrophosphoryl-undecaprenol N-acetylglucosamine transferase (342 aa).

UDP-N-acetyl-alpha-D-glucosamine is bound by residues 10-12, Asn-124, Ser-177, and Gln-275; that span reads TGG.

This sequence belongs to the glycosyltransferase 28 family. MurG subfamily.

Its subcellular location is the cell inner membrane. The catalysed reaction is di-trans,octa-cis-undecaprenyl diphospho-N-acetyl-alpha-D-muramoyl-L-alanyl-D-glutamyl-meso-2,6-diaminopimeloyl-D-alanyl-D-alanine + UDP-N-acetyl-alpha-D-glucosamine = di-trans,octa-cis-undecaprenyl diphospho-[N-acetyl-alpha-D-glucosaminyl-(1-&gt;4)]-N-acetyl-alpha-D-muramoyl-L-alanyl-D-glutamyl-meso-2,6-diaminopimeloyl-D-alanyl-D-alanine + UDP + H(+). The protein operates within cell wall biogenesis; peptidoglycan biosynthesis. Cell wall formation. Catalyzes the transfer of a GlcNAc subunit on undecaprenyl-pyrophosphoryl-MurNAc-pentapeptide (lipid intermediate I) to form undecaprenyl-pyrophosphoryl-MurNAc-(pentapeptide)GlcNAc (lipid intermediate II). This Campylobacter jejuni subsp. doylei (strain ATCC BAA-1458 / RM4099 / 269.97) protein is UDP-N-acetylglucosamine--N-acetylmuramyl-(pentapeptide) pyrophosphoryl-undecaprenol N-acetylglucosamine transferase.